The following is a 128-amino-acid chain: MAKLTKDELIEAFKEMTLIELSEFVKEFEEVFDVTAAAPVAAVAAAPGAEGGAAAEEKDEFDVVLEDAGAKKIGVIKVVREIVSGLGLKEAKELVEGAPKAILEGASKDDAEAAKTKLEEAGAKVSLK.

Belongs to the bacterial ribosomal protein bL12 family. In terms of assembly, homodimer. Part of the ribosomal stalk of the 50S ribosomal subunit. Forms a multimeric L10(L12)X complex, where L10 forms an elongated spine to which 2 to 4 L12 dimers bind in a sequential fashion. Binds GTP-bound translation factors.

In terms of biological role, forms part of the ribosomal stalk which helps the ribosome interact with GTP-bound translation factors. Is thus essential for accurate translation. The chain is Large ribosomal subunit protein bL12 from Corynebacterium jeikeium (strain K411).